A 1614-amino-acid polypeptide reads, in one-letter code: Adenylate cyclase type 10 (1614 aa).

Guanylate cyclase domains lie at Val-42–Gln-179 and Thr-293–Met-418. Mg(2+)-binding residues include Asp-47 and Ile-48. An ATP-binding site is contributed by Asp-47–Thr-52. Lys-95 is a hydrogencarbonate binding site. Asp-99 is a Mg(2+) binding site. ATP-binding residues include Asp-99 and Lys-144. Residues Val-167, Arg-176, and Met-337 each coordinate hydrogencarbonate. ATP-binding positions include Val-406 and Asn-412 to Arg-416.

Belongs to the adenylyl cyclase class-4/guanylyl cyclase family. Mg(2+) serves as cofactor. Mn(2+) is required as a cofactor. Expressed in testis.

The protein resides in the cell membrane. The protein localises to the cytoplasm. Its subcellular location is the cytoskeleton. It localises to the perinuclear region. It is found in the nucleus. The protein resides in the cell projection. The protein localises to the cilium. Its subcellular location is the mitochondrion. The enzyme catalyses ATP = 3',5'-cyclic AMP + diphosphate. Its activity is regulated as follows. Activated by manganese or magnesium ions. In the presence of magnesium ions, the enzyme is activated by bicarbonate. Calcium mildly increases the enzyme activity, also in the presence of magnesium ions. Catalyzes the formation of the signaling molecule cAMP. May function as sensor that mediates responses to changes in cellular bicarbonate and CO(2) levels. Has a critical role in mammalian spermatogenesis by producing the cAMP which regulates cAMP-responsive nuclear factors indispensable for sperm maturation in the epididymis. Induces capacitation, the maturational process that sperm undergo prior to fertilization. Involved in ciliary beat regulation. The chain is Adenylate cyclase type 10 (Adcy10) from Mus musculus (Mouse).